The chain runs to 263 residues: 3-methyl-2-oxobutanoate hydroxymethyltransferase (263 aa).

Positions 45 and 84 each coordinate Mg(2+). 3-methyl-2-oxobutanoate is bound by residues 45 to 46 (DS), Asp84, and Lys112. Glu114 serves as a coordination point for Mg(2+). Glu181 acts as the Proton acceptor in catalysis.

The protein belongs to the PanB family. Homodecamer; pentamer of dimers. Mg(2+) is required as a cofactor.

The protein localises to the cytoplasm. It carries out the reaction 3-methyl-2-oxobutanoate + (6R)-5,10-methylene-5,6,7,8-tetrahydrofolate + H2O = 2-dehydropantoate + (6S)-5,6,7,8-tetrahydrofolate. It participates in cofactor biosynthesis; (R)-pantothenate biosynthesis; (R)-pantoate from 3-methyl-2-oxobutanoate: step 1/2. Functionally, catalyzes the reversible reaction in which hydroxymethyl group from 5,10-methylenetetrahydrofolate is transferred onto alpha-ketoisovalerate to form ketopantoate. The sequence is that of 3-methyl-2-oxobutanoate hydroxymethyltransferase from Buchnera aphidicola subsp. Acyrthosiphon pisum (strain 5A).